The chain runs to 1026 residues: MATTSRRPVLTRAKVIVPVLLAVALVIAFVAIFTRLYTDLLFYRSVDFSKVFTTVIYTRILLFLIFGAVMAVVIGTNIVLGYRFRPQLRPLSTEQQNLERYRSAIEPYMKLVLVAVAAVFGLAAGLSASGRWRTWLLWVNGESFGTKDPQFHRDISYYAFTYPFQRFLLGFLLTAVLLSLLVTVLTHYLFGGIRLQTPGERVTPAAKAHISVLLGLLALLKAWAYYLDRFGSVFSSRGVATGASYTDVHAVLPAKLILLFISLACAVLFIYNIFQRGWTLPLLGAGILVLSSVVIGGIYPAFIQQFQVRPNEATREQPYIERNIAATRAAYGIQNVKPQSYAARTDVTAAQVAADTGTVPNTRLLDPSKLSRTFQQLQQIRGYYTFPKTLDVDRYTVTGADKKQTTRDYVVSVRELNQAGLGADQRNWINEHLTYTHGKGFVAAPSNTVDEGQPAFDEGEQNLPQKGDFDVRENRVYFGEMSPNYSVVGTRQVEIDGPGPGADTQVTTTYTGDGGVSIGSTFRQALFALRFGEKNLLLSGDITKNSRILYERNPRDRVSKAAPWLTLDGDPYPAVVNGRITWILDGYTTSDGYPYSARRTLGDVTADSVTAQSGNRARQAANQVNYIRNSVKATVDAYDGTVTLYAWDESDPVLRTWMKAFPDTVKPKKDISPSLMAHLRYPEDLFKVQRDLIGQYHVSDPRDFYSQEDFWQVSESPDGSGQPQPPFYVYSKLPDRSGPSYNLTSPLISARSSKLAAYMAVSSDPSNYGQFTLLKLPPGGTINGPVQVQNAIESNGDVANKLTLWRGAGSQTIEGNLLTLPVAGGLLYVEPYYVQARGGSGYPTLQGIATAFGERIGFGTSLGEALDKVFGSGAGAAAAGAGTGATTTTGGGGQATTQGGGTGAAPPGGTSGLQDAVNDADSAYKAGQDALRKNPPDFNAYGQAQTDLADALSRLRTLASPPTTPPAASPTPSRSAAPTTRGTAAGSAPPGTTPAVAAPAGPSGPPSPAGATAGPPQQPRAAPPPG.

7 consecutive transmembrane segments (helical) span residues 13–33 (AKVIVPVLLAVALVIAFVAIF), 60–80 (ILLFLIFGAVMAVVIGTNIVL), 108–128 (YMKLVLVAVAAVFGLAAGLSA), 167–187 (FLLGFLLTAVLLSLLVTVLTH), 208–228 (AHISVLLGLLALLKAWAYYLD), 250–270 (AVLPAKLILLFISLACAVLFI), and 283–303 (LGAGILVLSSVVIGGIYPAFI). Positions 877 to 888 (AAAGAGTGATTT) are enriched in low complexity. Disordered stretches follow at residues 877–916 (AAAGAGTGATTTTGGGGQATTQGGGTGAAPPGGTSGLQDA) and 958–1026 (LASP…PPPG). Over residues 889–903 (TGGGGQATTQGGGTG) the composition is skewed to gly residues. Over residues 970-1001 (PTPSRSAAPTTRGTAAGSAPPGTTPAVAAPAG) the composition is skewed to low complexity. A compositionally biased stretch (pro residues) spans 1016–1026 (PQQPRAAPPPG).

It belongs to the UPF0182 family.

It localises to the cell membrane. This is UPF0182 protein FRAAL6027 from Frankia alni (strain DSM 45986 / CECT 9034 / ACN14a).